The chain runs to 127 residues: Adult-specific rigid cuticular protein 12.6 (127 aa).

Residues 9–87 enclose the Chitin-binding type R&amp;R domain; sequence GPAYNFGYNT…ALAALAPKAP (79 aa).

Its function is as follows. Component of the rigid cuticle of the spider. The chain is Adult-specific rigid cuticular protein 12.6 from Araneus diadematus (European garden spider).